A 225-amino-acid polypeptide reads, in one-letter code: Uracil-DNA glycosylase (225 aa).

The Proton acceptor role is filled by Asp-68.

Belongs to the uracil-DNA glycosylase (UDG) superfamily. UNG family.

The protein localises to the cytoplasm. The enzyme catalyses Hydrolyzes single-stranded DNA or mismatched double-stranded DNA and polynucleotides, releasing free uracil.. Its function is as follows. Excises uracil residues from the DNA which can arise as a result of misincorporation of dUMP residues by DNA polymerase or due to deamination of cytosine. This Parafrankia sp. (strain EAN1pec) protein is Uracil-DNA glycosylase.